A 545-amino-acid polypeptide reads, in one-letter code: T-box transcription factor TBX4 (545 aa).

The segment at residues 71–251 (LHEKELWKKF…NNPFAKGFRG (181 aa)) is a DNA-binding region (T-box). Residues 479 to 509 (QSQVRERGPSASFPRERGLPQGCERKPPSPH) form a disordered region. Residues 482-505 (VRERGPSASFPRERGLPQGCERKP) show a composition bias toward basic and acidic residues. At Ser-507 the chain carries Phosphoserine.

It is found in the nucleus. Functionally, transcriptional regulator that has an essential role in the organogenesis of lungs, pelvis, and hindlimbs. The polypeptide is T-box transcription factor TBX4 (TBX4) (Homo sapiens (Human)).